The chain runs to 377 residues: All-trans-retinol dehydrogenase [NAD(+)] ADH4 (377 aa).

C47 contributes to the Zn(2+) binding site. T49 contacts NAD(+). Zn(2+) is bound by residues H68, C98, C101, C104, C112, and C179. Residues 204–209, D228, K233, 297–299, 320–322, and R372 each bind NAD(+); these read GLGCVG, VGA, and TFF.

The protein belongs to the zinc-containing alcohol dehydrogenase family. Class-II subfamily. Dimer. Requires Zn(2+) as cofactor. In terms of tissue distribution, liver specific.

It localises to the cytoplasm. The catalysed reaction is all-trans-retinol + NAD(+) = all-trans-retinal + NADH + H(+). It catalyses the reaction 9-cis-retinol + NAD(+) = 9-cis-retinal + NADH + H(+). The enzyme catalyses 20-hydroxy-(5Z,8Z,11Z,14Z)-eicosatetraenoate + NAD(+) = 20-oxo-(5Z,8Z,11Z,14Z)-eicosatetraenoate + NADH + H(+). It carries out the reaction 20-oxo-(5Z,8Z,11Z,14Z)-eicosatetraenoate + NAD(+) + H2O = (5Z,8Z,11Z,14Z)-eicosatetraenedioate + NADH + 2 H(+). The catalysed reaction is 1,4-benzoquinone + NADH + H(+) = hydroquinone + NAD(+). Its activity is regulated as follows. Oxidation of 20-HETE is inhibited by low concentrations of N-heptylformamide. Oxidation of 20-HETE is a decreased by 55-65% by either all-trans-retinol or all-trans-retinoic acid. Strongly inhibited by omega-hydroxy fatty acids. In terms of biological role, catalyzes the NAD-dependent oxidation of either all-trans-retinol or 9-cis-retinol. Also oxidizes long chain omega-hydroxy fatty acids, such as 20-HETE, producing both the intermediate aldehyde, 20-oxoarachidonate and the end product, a dicarboxylic acid, (5Z,8Z,11Z,14Z)-eicosatetraenedioate. Also catalyzes the reduction of benzoquinones. This chain is All-trans-retinol dehydrogenase [NAD(+)] ADH4, found in Mus musculus (Mouse).